Here is a 403-residue protein sequence, read N- to C-terminus: Non-structural maintenance of chromosomes element 4 homolog A (403 aa).

Residues 1–45 (MRKTVKRESEATGGKREADDEPEKLRSVKKEKQRKTEADSVRPDE) show a composition bias toward basic and acidic residues. 3 disordered regions span residues 1–57 (MRKT…QGIS), 194–226 (LKQR…EEKT), and 342–403 (SSCP…LTSS). A compositionally biased stretch (basic residues) spans 196–206 (QRKRAPNRKRT). A compositionally biased stretch (low complexity) spans 342–353 (SSCPAASAPASA). The segment covering 354–363 (DFTQDTQTTP) has biased composition (polar residues). Residues 384–393 (TPDKEGDGTR) are compositionally biased toward basic and acidic residues. Positions 394-403 (RRCKRRLTSS) are enriched in basic residues.

The protein belongs to the NSE4 family. In terms of assembly, interacts with SMC5, SMC6A or SMC6B. The SMC5-SMC6 complex is composed of the SMC5 and SMC6 heterodimer attached via their hinge domain and from the non-SMC subunit NSE4A or NSE4B. In terms of tissue distribution, expressed in seedlings, rosette leaves and floral buds.

It localises to the nucleus. Its function is as follows. Component of the SMC5-SMC6 complex, that promotes sister chromatid alignment after DNA damage and facilitates double-stranded DNA breaks (DSBs) repair via homologous recombination between sister chromatids. This is Non-structural maintenance of chromosomes element 4 homolog A (NSE4A) from Arabidopsis thaliana (Mouse-ear cress).